Here is a 191-residue protein sequence, read N- to C-terminus: Large ribosomal subunit protein uL5 (191 aa).

This sequence belongs to the universal ribosomal protein uL5 family. Part of the 50S ribosomal subunit; part of the 5S rRNA/L5/L18/L25 subcomplex. Contacts the 5S rRNA and the P site tRNA. Forms a bridge to the 30S subunit in the 70S ribosome.

Its function is as follows. This is one of the proteins that bind and probably mediate the attachment of the 5S RNA into the large ribosomal subunit, where it forms part of the central protuberance. In the 70S ribosome it contacts protein S13 of the 30S subunit (bridge B1b), connecting the 2 subunits; this bridge is implicated in subunit movement. Contacts the P site tRNA; the 5S rRNA and some of its associated proteins might help stabilize positioning of ribosome-bound tRNAs. The chain is Large ribosomal subunit protein uL5 from Thermobifida fusca (strain YX).